A 288-amino-acid polypeptide reads, in one-letter code: 33 kDa chaperonin (288 aa).

2 disulfides stabilise this stretch: Cys225-Cys227 and Cys258-Cys261.

The protein belongs to the HSP33 family. In terms of processing, under oxidizing conditions two disulfide bonds are formed involving the reactive cysteines. Under reducing conditions zinc is bound to the reactive cysteines and the protein is inactive.

It is found in the cytoplasm. Redox regulated molecular chaperone. Protects both thermally unfolding and oxidatively damaged proteins from irreversible aggregation. Plays an important role in the bacterial defense system toward oxidative stress. This chain is 33 kDa chaperonin, found in Shewanella denitrificans (strain OS217 / ATCC BAA-1090 / DSM 15013).